Consider the following 341-residue polypeptide: S-adenosylmethionine:tRNA ribosyltransferase-isomerase (341 aa).

This sequence belongs to the QueA family. Monomer.

The protein localises to the cytoplasm. It carries out the reaction 7-aminomethyl-7-carbaguanosine(34) in tRNA + S-adenosyl-L-methionine = epoxyqueuosine(34) in tRNA + adenine + L-methionine + 2 H(+). Its pathway is tRNA modification; tRNA-queuosine biosynthesis. In terms of biological role, transfers and isomerizes the ribose moiety from AdoMet to the 7-aminomethyl group of 7-deazaguanine (preQ1-tRNA) to give epoxyqueuosine (oQ-tRNA). This chain is S-adenosylmethionine:tRNA ribosyltransferase-isomerase, found in Clostridium botulinum (strain Langeland / NCTC 10281 / Type F).